The chain runs to 215 residues: Protein Thf1 (215 aa).

The stretch at 188–209 forms a coiled coil; it reads IELVQETIAAERRKKERRQAEQ.

It belongs to the THF1 family.

May be involved in photosynthetic membrane biogenesis. The polypeptide is Protein Thf1 (Synechococcus sp. (strain CC9902)).